An 870-amino-acid polypeptide reads, in one-letter code: Disks large homolog 2 (870 aa).

Residues Cys-5 and Cys-7 are each lipidated (S-palmitoyl cysteine). The residue at position 28 (Ser-28) is a Phosphoserine. The residue at position 58 (Tyr-58) is a Phosphotyrosine. Ser-65 carries the phosphoserine modification. PDZ domains lie at 98–184 and 193–279; these read EITL…VRRR and EIKL…VGKP. A phosphoserine mark is found at Ser-307, Ser-328, Ser-360, Ser-365, Ser-406, and Ser-414. Residues 421–501 form the PDZ 3 domain; it reads KVVLHKGSTG…QTVTIIAQYQ (81 aa). The residue at position 505 (Tyr-505) is a Phosphotyrosine. Ser-528, Ser-530, Ser-553, Ser-627, and Ser-635 each carry phosphoserine. In terms of domain architecture, SH3 spans 536 to 606; it reads KRSLYVRAMF…PSKRRVERKE (71 aa). The 176-residue stretch at 680-855 folds into the Guanylate kinase-like domain; that stretch reads TRPVIILGPM…IYNQCKLVIE (176 aa). A phosphotyrosine mark is found at Tyr-750 and Tyr-755.

The protein belongs to the MAGUK family. Interacts through its PDZ domains with NETO1. Interacts with NOS1/nNOS through second PDZ domain. Interacts with KCNJ2/Kir2.1 (via C-terminus) through one of its PDZ domains. Interacts with KCNJ4, Interacts with FRMPD4 (via C-terminus). Interacts with LRFN1, LRFN2 and LRFN4. Interacts with FASLG. Interacts with KCNJ4. Interacts with ADAM22. Interacts with DGKI (via PDZ-binding motif). Post-translationally, palmitoylation of isoform 1 is not required for targeting to postsynaptic density.

It is found in the cell membrane. The protein resides in the postsynaptic density. It localises to the synapse. Its subcellular location is the membrane. The protein localises to the cell projection. It is found in the axon. The protein resides in the perikaryon. Required for perception of chronic pain through NMDA receptor signaling. Regulates surface expression of NMDA receptors in dorsal horn neurons of the spinal cord. Interacts with the cytoplasmic tail of NMDA receptor subunits as well as inward rectifying potassium channels. Involved in regulation of synaptic stability at cholinergic synapses. Part of the postsynaptic protein scaffold of excitatory synapses. The polypeptide is Disks large homolog 2 (DLG2) (Homo sapiens (Human)).